A 437-amino-acid chain; its full sequence is GTPase Der (437 aa).

2 EngA-type G domains span residues 3–167 and 176–352; these read NIVA…TKKV and PAIA…DIRQ. GTP-binding positions include 9–16, 56–60, 119–122, 182–189, 229–233, and 294–297; these read GRPNVGKS, DTGGW, NKAD, GKPNVGKS, DTAGI, and NKWD. The region spanning 353 to 437 is the KH-like domain; it reads IKIPTSQLNR…TPINIFMREK (85 aa).

It belongs to the TRAFAC class TrmE-Era-EngA-EngB-Septin-like GTPase superfamily. EngA (Der) GTPase family. In terms of assembly, associates with the 50S ribosomal subunit.

Its function is as follows. GTPase that plays an essential role in the late steps of ribosome biogenesis. The protein is GTPase Der of Azobacteroides pseudotrichonymphae genomovar. CFP2.